The sequence spans 466 residues: UDP-N-acetylmuramoylalanine--D-glutamate ligase (466 aa).

139–145 (GTAGKGG) is an ATP binding site.

It belongs to the MurCDEF family.

It is found in the cytoplasm. It carries out the reaction UDP-N-acetyl-alpha-D-muramoyl-L-alanine + D-glutamate + ATP = UDP-N-acetyl-alpha-D-muramoyl-L-alanyl-D-glutamate + ADP + phosphate + H(+). The protein operates within cell wall biogenesis; peptidoglycan biosynthesis. Functionally, cell wall formation. Catalyzes the addition of glutamate to the nucleotide precursor UDP-N-acetylmuramoyl-L-alanine (UMA). This chain is UDP-N-acetylmuramoylalanine--D-glutamate ligase, found in Deinococcus geothermalis (strain DSM 11300 / CIP 105573 / AG-3a).